A 118-amino-acid polypeptide reads, in one-letter code: Holin-like protein CidA 2 (118 aa).

Transmembrane regions (helical) follow at residues 4-26, 33-52, 62-84, and 91-113; these read VTLLLQVGVLYVFSLVGTWIQGV, GSLIGMLILFLLLSTRVLPL, LIVFLPLFLIPSTTGLMEYGSFL, and IFLLVVASTVVTLIVSGYISQLL.

It belongs to the CidA/LrgA family. CidA subfamily.

It localises to the cell membrane. Increases the activity of extracellular murein hydrolases possibly by mediating their export via hole formation. Inhibited by the antiholin-like proteins LrgAB. In an unstressed cell, the LrgAB products probably inhibit the function of the CidA protein. When a cell is stressed by the addition of antibiotics or by other factors in the environment, CidA possibly oligomerizes within the bacterial cell membrane, creating lesions that disrupt the proton motive force, which in turn results in loss of cell viability. These lesions are also hypothesized to regulate the subsequent cell lysis by either allowing the murein hydrolases access to the cell wall substrate and/or regulating their activity by a possible change in the cell wall pH that results from loss of membrane potential. This chain is Holin-like protein CidA 2 (cidA2), found in Bacillus cereus (strain ATCC 14579 / DSM 31 / CCUG 7414 / JCM 2152 / NBRC 15305 / NCIMB 9373 / NCTC 2599 / NRRL B-3711).